The sequence spans 576 residues: MGVVENRKILPEKKLGGWRAITFILGNETLEKLGSIGVSANFMLYLRNVFHMEPVEAFNVYYLWMGLTNFAPLLGALISDAYIGRFKTIAYASLFSILGLMTVTLTACLPQLHPPPCNNPHPDECDDPNKLQLGILFLGLGFLSIGSGGIRPCSIPFGVDQFDQRTEQGLKGVASFFNWYYLTLTMVLIFSHTVVVYLQTVSWVIGFSIPTSLMACAVVLFFVGMRFYVYVKPEGSVFSGIARVIVAARKKRDLKISLVDDGTEEYYEPPVKPGVLSKLPLTDQFKFLDKAAVILDGDLTSEGVPANKWRLCSIQEVEEVKCLIRVVPVWSAGIISIVAMTTQATFMVFQATKMDRHMGPHFEIPAASITVISYITIGIWVPIYEHLLVPFLWRMRKFRVTLLQRMGIGIVFAILSMFTAGFVEGVRRTRATEMTQMSVFWLALPLILMGLCESFNFIGLIEFFNSQFPEHMRSIANSLFPLSFAAANYLSSLLVTTVHKVSGTKDHPDWLNKDLDRGKLDYFYYLIAVLGVVNLVYFWYCAHRYQYKAGSQIEDFNEEKSLLDIEPNQRHDQSPS.

Transmembrane regions (helical) follow at residues 58–78 (FNVY…GALI), 89–109 (IAYA…TACL), 130–150 (KLQL…SGGI), 176–196 (FFNW…TVVV), 203–223 (WVIG…LFFV), 329–349 (VWSA…FMVF), 364–384 (IPAA…VPIY), 406–426 (MGIG…VEGV), 441–461 (WLAL…IGLI), 475–495 (IANS…SLLV), and 522–542 (YFYY…WYCA).

Belongs to the major facilitator superfamily. Proton-dependent oligopeptide transporter (POT/PTR) (TC 2.A.17) family. Expressed in flowers and siliques. Expressed in vascular bundle of the siliques and in funiculus.

It localises to the cell membrane. In terms of biological role, low-affinity proton-dependent nitrate transporter. Not involved in dipeptides transport. Involved in delivering nitrate for seed development. The protein is Protein NRT1/ PTR FAMILY 2.12 (NPF2.12) of Arabidopsis thaliana (Mouse-ear cress).